The primary structure comprises 589 residues: Aspartate--tRNA(Asp/Asn) ligase (589 aa).

Position 175 (Glu-175) interacts with L-aspartate. Positions Gln-199 to Lys-202 are aspartate. Arg-221 is a binding site for L-aspartate. Residues Arg-221–Glu-223 and Gln-230 contribute to the ATP site. His-451 lines the L-aspartate pocket. An ATP-binding site is contributed by Glu-485. Position 492 (Arg-492) interacts with L-aspartate. An ATP-binding site is contributed by Gly-537 to Arg-540.

The protein belongs to the class-II aminoacyl-tRNA synthetase family. Type 1 subfamily. As to quaternary structure, homodimer.

The protein resides in the cytoplasm. The catalysed reaction is tRNA(Asx) + L-aspartate + ATP = L-aspartyl-tRNA(Asx) + AMP + diphosphate. Its function is as follows. Aspartyl-tRNA synthetase with relaxed tRNA specificity since it is able to aspartylate not only its cognate tRNA(Asp) but also tRNA(Asn). Reaction proceeds in two steps: L-aspartate is first activated by ATP to form Asp-AMP and then transferred to the acceptor end of tRNA(Asp/Asn). This is Aspartate--tRNA(Asp/Asn) ligase from Roseiflexus sp. (strain RS-1).